The following is a 486-amino-acid chain: MGTGKKEKSRRIREGDTKDGNLRVKGENFYRDSKRVKFLNMYTSGKEIRNKKGNLIRAASFQDSTIPDARVQPDRRWFGNTRVISQDALQHFRSALGETQKDTYQVLLRRNKLPMSLLEEKDADESPKARILDTESYADAFGPKAQRKRPRLAASNLEDLVKATNEDITKYEEKQVLDATLGLMGNQEDKENGWTSAAKEAIFSKGQSKRIWNELYKVIDSSDVVIHVLDARDPLGTRCKSVEEYMKKETPHKHLIYVLNKCDLVPTWVAAAWVKHLSKERPTLAFHASITNSFGKGSLIQLLRQFSQLHTDRKQISVGFIGYPNTGKSSIINTLRKKKVCQVAPIPGETKVWQYITLMKRIFLIDCPGIVPPSSKDSEEDILFRGVVRVEHVTHPEQYIPGVLKRCQVKHLERTYEISGWKDATEFIEILARKQGRLLKGGEPDESGVSKQILNDFNRGKIPWFVLPPEKEGEEKPKKKEVEKTA.

The disordered stretch occupies residues 1 to 20; the sequence is MGTGKKEKSRRIREGDTKDG. A phosphoserine mark is found at S60, S85, and S155. The region spanning 212–373 is the CP-type G domain; that stretch reads WNELYKVIDS…LIDCPGIVPP (162 aa). Residues 322–329 and 366–370 contribute to the GTP site; these read GYPNTGKS and DCPGI.

This sequence belongs to the TRAFAC class YlqF/YawG GTPase family. NOG2 subfamily.

The protein resides in the nucleus. The protein localises to the nucleolus. Its function is as follows. GTPase that associates with pre-60S ribosomal subunits in the nucleolus and is required for their nuclear export and maturation. The polypeptide is Nucleolar GTP-binding protein 2 (NOG2) (Saccharomyces cerevisiae (strain ATCC 204508 / S288c) (Baker's yeast)).